The primary structure comprises 140 residues: Large ribosomal subunit protein uL22c (140 aa).

This sequence belongs to the universal ribosomal protein uL22 family. In terms of assembly, part of the 50S ribosomal subunit.

It localises to the plastid. It is found in the chloroplast. In terms of biological role, this protein binds specifically to 23S rRNA. Its function is as follows. The globular domain of the protein is located near the polypeptide exit tunnel on the outside of the subunit, while an extended beta-hairpin is found that lines the wall of the exit tunnel in the center of the 70S ribosome. This chain is Large ribosomal subunit protein uL22c (rpl22), found in Calycanthus floridus var. glaucus (Eastern sweetshrub).